The chain runs to 301 residues: 4-hydroxybenzoate octaprenyltransferase (301 aa).

Transmembrane regions (helical) follow at residues 34–54, 57–77, 108–128, 163–183, 222–242, 248–268, and 280–300; these read IGSL…AGGL, LWTL…GCVI, LWVF…LNWL, WGIP…AWLL, DLIA…LVGL, IAYW…FHIA, and FLHN…SLAL.

This sequence belongs to the UbiA prenyltransferase family. Mg(2+) is required as a cofactor.

The protein localises to the cell inner membrane. It carries out the reaction all-trans-octaprenyl diphosphate + 4-hydroxybenzoate = 4-hydroxy-3-(all-trans-octaprenyl)benzoate + diphosphate. It participates in cofactor biosynthesis; ubiquinone biosynthesis. Functionally, catalyzes the prenylation of para-hydroxybenzoate (PHB) with an all-trans polyprenyl group. Mediates the second step in the final reaction sequence of ubiquinone-8 (UQ-8) biosynthesis, which is the condensation of the polyisoprenoid side chain with PHB, generating the first membrane-bound Q intermediate 3-octaprenyl-4-hydroxybenzoate. The sequence is that of 4-hydroxybenzoate octaprenyltransferase from Xanthomonas campestris pv. campestris (strain 8004).